A 208-amino-acid chain; its full sequence is N-(5'-phosphoribosyl)anthranilate isomerase (208 aa).

This sequence belongs to the TrpF family.

It catalyses the reaction N-(5-phospho-beta-D-ribosyl)anthranilate = 1-(2-carboxyphenylamino)-1-deoxy-D-ribulose 5-phosphate. It functions in the pathway amino-acid biosynthesis; L-tryptophan biosynthesis; L-tryptophan from chorismate: step 3/5. This chain is N-(5'-phosphoribosyl)anthranilate isomerase, found in Neisseria meningitidis serogroup C / serotype 2a (strain ATCC 700532 / DSM 15464 / FAM18).